Reading from the N-terminus, the 525-residue chain is Keratin, type II cytoskeletal 71 (525 aa).

Residues 1-131 form a head region; sequence MSRQFTCKSG…DPEIQKVRAQ (131 aa). Positions 132–167 are coil 1A; sequence EREQIKALNNKFASFIDKVRFLEQQNQVLETKWELL. The IF rod domain occupies 132 to 445; that stretch reads EREQIKALNN…KLLESEECRM (314 aa). The linker 1 stretch occupies residues 168–186; that stretch reads QQLDLNNCKNNLEPILEGY. The interval 187–278 is coil 1B; sequence ISNLRKQLET…CLYEAEIAQI (92 aa). The segment at 279-302 is linker 12; that stretch reads QSHISDMSVILSMDNNRDLNLDSI. The tract at residues 303 to 441 is coil 2; it reads IDEVRAQYED…ATYRKLLESE (139 aa). The tract at residues 442–525 is tail; it reads ECRMSGEFPS…LSAPSKKASR (84 aa). Residues 492–525 are disordered; sequence VRGGESRSRSSTTDYKDALGKGSSLSAPSKKASR. Positions 495–510 are enriched in basic and acidic residues; that stretch reads GESRSRSSTTDYKDAL.

The protein belongs to the intermediate filament family. Heterodimer of a type I and a type II keratin. Associates with KRT16 and/or KRT17.

The protein localises to the cytoplasm. The protein resides in the cytoskeleton. In terms of biological role, plays a central role in hair formation. Essential component of keratin intermediate filaments in the inner root sheath (IRS) of the hair follicle. The sequence is that of Keratin, type II cytoskeletal 71 (KRT71) from Bos taurus (Bovine).